The sequence spans 336 residues: Biotin synthase (336 aa).

Residues 55 to 288 (GEAASLHACS…RTIIKFAAGR (234 aa)) form the Radical SAM core domain. Residues Cys-73, Cys-77, and Cys-80 each coordinate [4Fe-4S] cluster. Cys-152, Cys-213, and Lys-283 together coordinate [2Fe-2S] cluster.

Belongs to the radical SAM superfamily. Biotin synthase family. As to quaternary structure, homodimer. Requires [4Fe-4S] cluster as cofactor. It depends on [2Fe-2S] cluster as a cofactor.

It catalyses the reaction (4R,5S)-dethiobiotin + (sulfur carrier)-SH + 2 reduced [2Fe-2S]-[ferredoxin] + 2 S-adenosyl-L-methionine = (sulfur carrier)-H + biotin + 2 5'-deoxyadenosine + 2 L-methionine + 2 oxidized [2Fe-2S]-[ferredoxin]. It functions in the pathway cofactor biosynthesis; biotin biosynthesis; biotin from 7,8-diaminononanoate: step 2/2. Catalyzes the conversion of dethiobiotin (DTB) to biotin by the insertion of a sulfur atom into dethiobiotin via a radical-based mechanism. This Chlorobium limicola (strain DSM 245 / NBRC 103803 / 6330) protein is Biotin synthase.